The chain runs to 390 residues: Spore development regulator vosA (390 aa).

The Velvet domain occupies 3-132; that stretch reads NNTSSDFDLI…ADQGVKLRIR (130 aa). Positions 137–149 are enriched in basic and acidic residues; that stretch reads TMLKRSTRPDEFH. 2 disordered regions span residues 137 to 191 and 265 to 390; these read TMLK…PVKR and QASA…GTPQ. The span at 165–175 shows a compositional bias: low complexity; that stretch reads PPSSSYGGYPP. A Nuclear localization signal motif is present at residues 273-280; the sequence is IPDPTGQS. Polar residues-rich tracts occupy residues 350 to 364 and 371 to 390; these read QTPQ…SQMV and SSVT…GTPQ.

This sequence belongs to the velvet family. VosA subfamily. As to quaternary structure, forms a heterodimeric complex with velB; the formation of the velB-vosA complex is light-dependent. Interacts with velA, velB and velC.

The protein localises to the nucleus. In terms of biological role, component of the velB-VosA heterodimeric complex that plays a dual role in activating genes associated with spore maturation and repressing certain development-associated genes. The complex binds DNA through the DNA-binding domain of vosA that recognizes an 11-nucleotide consensus sequence 5'-CTGGCCGCGGC-3' consisting of two motifs in the promoters of key developmental regulatory genes. The polypeptide is Spore development regulator vosA (Penicillium rubens (strain ATCC 28089 / DSM 1075 / NRRL 1951 / Wisconsin 54-1255) (Penicillium chrysogenum)).